The sequence spans 500 residues: Coiled-coil domain-containing protein 125 (500 aa).

The disordered stretch occupies residues 1-105; sequence MSKVPRSSSE…TDSNSELSDE (105 aa). Residues 10-23 show a composition bias toward acidic residues; the sequence is EAEDIWETEDDMTE. Positions 92 to 101 are enriched in polar residues; that stretch reads RLSSTDSNSE. Coiled coils occupy residues 101–237 and 286–314; these read ELSD…LEAL and STRK…TADA. Phosphoserine is present on Ser-492.

In terms of tissue distribution, expressed in many tissues, with highest levels in spleen, thymus and bone marrow.

It is found in the cytoplasm. Its function is as follows. May be involved in the regulation of cell migration. This Mus musculus (Mouse) protein is Coiled-coil domain-containing protein 125 (Ccdc125).